Reading from the N-terminus, the 426-residue chain is C4-dicarboxylate transport protein (426 aa).

A run of 8 helical transmembrane segments spans residues valine 8–proline 28, leucine 44–methionine 64, leucine 78–valine 98, glycine 148–glycine 168, valine 173–threonine 193, leucine 222–alanine 242, glycine 297–alanine 317, and alanine 355–isoleucine 375.

The protein belongs to the dicarboxylate/amino acid:cation symporter (DAACS) (TC 2.A.23) family.

It localises to the cell inner membrane. Its function is as follows. Responsible for the transport of dicarboxylates such as succinate, fumarate, and malate from the periplasm across the membrane. The polypeptide is C4-dicarboxylate transport protein (Paraburkholderia xenovorans (strain LB400)).